The following is a 469-amino-acid chain: Ubiquitin carboxyl-terminal hydrolase MINDY-1 (469 aa).

The tract at residues 1–85 is disordered; sequence MEHHQPEDPA…APPGPTLGTL (85 aa). Basic and acidic residues predominate over residues 34–53; it reads HPQDTDARDADGEAGEREPA. Residue S103 is modified to Phosphoserine. Residue C137 is the Nucleophile of the active site. Catalysis depends on H319, which acts as the Proton acceptor. A ubiquitin-binding domain (UBD) region spans residues 388-426; that stretch reads QVDQDYLIALSLQQQQPRGTLGLTDLELAQQLQQEEYQQ. The segment at 428–469 is disordered; sequence QAAQPVWMRTRALSPQGRGATSGRPAGERRQRPKHESDCILL. A Phosphoserine modification is found at S441. The segment covering 453–469 has biased composition (basic and acidic residues); it reads AGERRQRPKHESDCILL.

Belongs to the MINDY deubiquitinase family. FAM63 subfamily.

It catalyses the reaction Thiol-dependent hydrolysis of ester, thioester, amide, peptide and isopeptide bonds formed by the C-terminal Gly of ubiquitin (a 76-residue protein attached to proteins as an intracellular targeting signal).. In terms of biological role, hydrolase that can specifically remove 'Lys-48'-linked conjugated ubiquitin from proteins. Has exodeubiquitinase activity and has a preference for long polyubiquitin chains. May play a regulatory role at the level of protein turnover. The chain is Ubiquitin carboxyl-terminal hydrolase MINDY-1 (MINDY1) from Pongo abelii (Sumatran orangutan).